The primary structure comprises 388 residues: Chorismate synthase (388 aa).

NADP(+) is bound by residues R39 and R45. Residues 130–132 (RSS), 251–252 (NA), G296, 311–315 (KPIPT), and R337 contribute to the FMN site.

The protein belongs to the chorismate synthase family. Homotetramer. FMNH2 is required as a cofactor.

The catalysed reaction is 5-O-(1-carboxyvinyl)-3-phosphoshikimate = chorismate + phosphate. It functions in the pathway metabolic intermediate biosynthesis; chorismate biosynthesis; chorismate from D-erythrose 4-phosphate and phosphoenolpyruvate: step 7/7. Its function is as follows. Catalyzes the anti-1,4-elimination of the C-3 phosphate and the C-6 proR hydrogen from 5-enolpyruvylshikimate-3-phosphate (EPSP) to yield chorismate, which is the branch point compound that serves as the starting substrate for the three terminal pathways of aromatic amino acid biosynthesis. This reaction introduces a second double bond into the aromatic ring system. The chain is Chorismate synthase from Streptococcus pyogenes serotype M5 (strain Manfredo).